The sequence spans 561 residues: Cation diffusion facilitator family protein 1 (561 aa).

Basic and acidic residues predominate over residues 1–20 (MEVTMEDRSVKADKADRDDN). A disordered region spans residues 1–26 (MEVTMEDRSVKADKADRDDNNTTSTE). Residues 1–112 (MEVTMEDRSV…SESVKGVSRS (112 aa)) are Cytoplasmic-facing. The helical transmembrane segment at 113–133 (LIIQIGMTVIFCALEFITGVV) threads the bilayer. The Extracellular portion of the chain corresponds to 134–136 (CSS). The helical transmembrane segment at 137 to 157 (IAMLADSYHMAADVMALIVAF) threads the bilayer. Over 158–176 (TCIKIATRPSTRLGYGWVR) the chain is Cytoplasmic. The chain crosses the membrane as a helical span at residues 177–197 (AETLGGFFNGIFMCTVCVLVF). At 198–215 (QEAVGRIINVHMITHPLQ) the chain is on the extracellular side. Residues 216 to 236 (VLVIGFIGLLINLFGMFNLSG) traverse the membrane as a helical segment. The Cytoplasmic segment spans residues 237–391 (HGHSHGGGSH…NVNIHGVWLH (155 aa)). The segment at 240 to 304 (SHGGGSHGHS…HTRLNGKFRS (65 aa)) is disordered. The interval 246–270 (HGHSHGGSHGHSHNNKKTKKNDGHG) is 6 X 2 AA approximate repeats of H-G. Positions 247 to 264 (GHSHGGSHGHSHNNKKTK) are enriched in basic residues. The helical transmembrane segment at 392–412 (LLSDAFGSVIVMISAGFVYFL) threads the bilayer. Residues 413–420 (PTWKIAAY) are Extracellular-facing. Residues 421–441 (LDPILSISLASIMGFTAVVLV) form a helical membrane-spanning segment. Residues 442 to 561 (KTSGEKLLKQ…SVSTENEITE (120 aa)) lie on the Cytoplasmic side of the membrane.

It belongs to the cation diffusion facilitator (CDF) transporter (TC 2.A.4) family. SLC30A subfamily. Interacts with lin-45 in a zinc-dependent manner. In terms of tissue distribution, expressed in intestinal cells. Expressed in the vulva.

The protein resides in the basolateral cell membrane. In terms of biological role, involved in the regulation of Pn.p cell fate determination. Involved in zinc metabolism and the decrease of the cytosolic zinc concentration which is thought to modulate Ras signaling. Involved in zinc transport from the intestinal lumen to the pseudocoelum. The polypeptide is Cation diffusion facilitator family protein 1 (cdf-1) (Caenorhabditis elegans).